The primary structure comprises 396 residues: Probable sugar efflux transporter (396 aa).

12 consecutive transmembrane segments (helical) span residues 15-35, 50-70, 81-101, 103-123, 136-156, 170-190, 209-229, 246-266, 275-295, 299-319, 333-353, and 364-384; these read VVTL…PVGL, VGIM…PFML, LICL…SWSF, VLVI…SITA, AQAL…GLPL, FFAI…LLPL, PALM…YTAY, FATA…VIFG, ALVS…LPAA, IHLG…GLGM, VAMA…ALVG, and MIGY…IIIF.

The protein belongs to the major facilitator superfamily. SotB (TC 2.A.1.2) family.

It is found in the cell inner membrane. Functionally, involved in the efflux of sugars. The physiological role may be the reduction of the intracellular concentration of toxic sugars or sugar metabolites. The polypeptide is Probable sugar efflux transporter (Escherichia coli O127:H6 (strain E2348/69 / EPEC)).